We begin with the raw amino-acid sequence, 251 residues long: DNA-directed RNA polymerase III subunit RPC7 (251 aa).

The disordered stretch occupies residues 186–251 (DDASTGDGAA…EEDPNEEAAF (66 aa)). Ser-189 carries the post-translational modification Phosphoserine. Acidic residues-rich tracts occupy residues 203–225 (GEDD…DDDY) and 234–251 (GDDD…EAAF).

Belongs to the eukaryotic RPC7 RNA polymerase subunit family. In terms of assembly, component of the RNA polymerase III (Pol III) complex consisting of 17 subunits.

It is found in the nucleus. DNA-dependent RNA polymerase catalyzes the transcription of DNA into RNA using the four ribonucleoside triphosphates as substrates. Specific peripheric component of RNA polymerase III which synthesizes small RNAs, such as 5S rRNA and tRNAs. C31 is involved in the formation of the initiation complex. This is DNA-directed RNA polymerase III subunit RPC7 (RPC31) from Saccharomyces cerevisiae (strain ATCC 204508 / S288c) (Baker's yeast).